Consider the following 339-residue polypeptide: MVLQKNWQSLIKPEKLEVEPGPVASRIATVVAEPLERGFGMTLGNALRRILLSSLQGAAVTAIQIDGVLHEFSAVPGVREDVTDIVLNVKQLALRMHGEGPKRMILTATGPGEVTAGQIQAGHDIEIMNPDLVICTLDDGVKLGMEFTVNMGKGYVAAAANRPEDAPIGLIPIDAIYSPVRRVSYKIEQTRVGQVTDYDKLLLTVETNGAVTPEDSLALAARILQDQLQLFINFDEPRPVQHEEPQDDLPFNRNLLRKVDELELSVRSANCLKNDNIVYIGDLVQKSEQEMLRTPNFGRKSLNEIKEVLTGMGLSLGMSVPAWPPENIEDLAKRLDETF.

The segment at 1 to 235 is alpha N-terminal domain (alpha-NTD); sequence MVLQKNWQSL…DQLQLFINFD (235 aa). The interval 251 to 339 is alpha C-terminal domain (alpha-CTD); it reads FNRNLLRKVD…DLAKRLDETF (89 aa).

Belongs to the RNA polymerase alpha chain family. As to quaternary structure, homodimer. The RNAP catalytic core consists of 2 alpha, 1 beta, 1 beta' and 1 omega subunit. When a sigma factor is associated with the core the holoenzyme is formed, which can initiate transcription.

It catalyses the reaction RNA(n) + a ribonucleoside 5'-triphosphate = RNA(n+1) + diphosphate. Its function is as follows. DNA-dependent RNA polymerase catalyzes the transcription of DNA into RNA using the four ribonucleoside triphosphates as substrates. In Gluconobacter oxydans (strain 621H) (Gluconobacter suboxydans), this protein is DNA-directed RNA polymerase subunit alpha.